Reading from the N-terminus, the 96-residue chain is Co-chaperonin GroES (96 aa).

The protein belongs to the GroES chaperonin family. As to quaternary structure, heptamer of 7 subunits arranged in a ring. Interacts with the chaperonin GroEL.

The protein localises to the cytoplasm. In terms of biological role, together with the chaperonin GroEL, plays an essential role in assisting protein folding. The GroEL-GroES system forms a nano-cage that allows encapsulation of the non-native substrate proteins and provides a physical environment optimized to promote and accelerate protein folding. GroES binds to the apical surface of the GroEL ring, thereby capping the opening of the GroEL channel. This is Co-chaperonin GroES from Aromatoleum aromaticum (strain DSM 19018 / LMG 30748 / EbN1) (Azoarcus sp. (strain EbN1)).